The following is a 179-amino-acid chain: MSRIGKIPVTVPAGVDVTISGQDVTVKGPKGTLALTISEPIAIEKAEDGSLSVTRPDDERRSRALHGLSRTLVANIITGVTEGYTKKMEIHGVGYRVALKGKDLEFALGFSHPVPIEAPEGITFVVESPTRFSVSGIDKQKVGQISANIRRLRRPDPYKGKGVRYEGEQIRRKVGKTGK.

It belongs to the universal ribosomal protein uL6 family. As to quaternary structure, part of the 50S ribosomal subunit.

Its function is as follows. This protein binds to the 23S rRNA, and is important in its secondary structure. It is located near the subunit interface in the base of the L7/L12 stalk, and near the tRNA binding site of the peptidyltransferase center. This Rhodococcus erythropolis (strain PR4 / NBRC 100887) protein is Large ribosomal subunit protein uL6.